Consider the following 195-residue polypeptide: Probable nicotinate-nucleotide adenylyltransferase (195 aa).

The protein belongs to the NadD family.

It catalyses the reaction nicotinate beta-D-ribonucleotide + ATP + H(+) = deamido-NAD(+) + diphosphate. It functions in the pathway cofactor biosynthesis; NAD(+) biosynthesis; deamido-NAD(+) from nicotinate D-ribonucleotide: step 1/1. In terms of biological role, catalyzes the reversible adenylation of nicotinate mononucleotide (NaMN) to nicotinic acid adenine dinucleotide (NaAD). The chain is Probable nicotinate-nucleotide adenylyltransferase from Salinibacter ruber (strain DSM 13855 / M31).